The primary structure comprises 237 residues: Putative N-acetylmannosamine-6-phosphate 2-epimerase (237 aa).

Belongs to the NanE family.

It catalyses the reaction an N-acyl-D-glucosamine 6-phosphate = an N-acyl-D-mannosamine 6-phosphate. It participates in amino-sugar metabolism; N-acetylneuraminate degradation; D-fructose 6-phosphate from N-acetylneuraminate: step 3/5. In terms of biological role, converts N-acetylmannosamine-6-phosphate (ManNAc-6-P) to N-acetylglucosamine-6-phosphate (GlcNAc-6-P). This chain is Putative N-acetylmannosamine-6-phosphate 2-epimerase, found in Listeria monocytogenes serovar 1/2a (strain ATCC BAA-679 / EGD-e).